The chain runs to 233 residues: Large ribosomal subunit protein uL1 (233 aa).

This sequence belongs to the universal ribosomal protein uL1 family. In terms of assembly, part of the 50S ribosomal subunit.

Its function is as follows. Binds directly to 23S rRNA. The L1 stalk is quite mobile in the ribosome, and is involved in E site tRNA release. Functionally, protein L1 is also a translational repressor protein, it controls the translation of the L11 operon by binding to its mRNA. The protein is Large ribosomal subunit protein uL1 of Thermotoga maritima (strain ATCC 43589 / DSM 3109 / JCM 10099 / NBRC 100826 / MSB8).